A 300-amino-acid polypeptide reads, in one-letter code: ETS homologous factor (300 aa).

Residues Ser-29–Gly-115 enclose the PNT domain. The interval Glu-183–His-202 is disordered. Residues Pro-185–Ala-195 show a composition bias toward basic and acidic residues. Positions Thr-207–Gly-289 form a DNA-binding region, ETS.

It belongs to the ETS family.

It localises to the nucleus. Functionally, transcriptional activator that may play a role in regulating epithelial cell differentiation and proliferation. May act as a repressor for a specific subset of ETS/AP-1-responsive genes, and as a modulator of the nuclear response to mitogen-activated protein kinase signaling cascades. Binds to DNA sequences containing the consensus nucleotide core sequence GGAA. Involved in regulation of TNFRSF10B/DR5 expression through Ets-binding sequences on the TNFRSF10B/DR5 promoter. This chain is ETS homologous factor (EHF), found in Pan paniscus (Pygmy chimpanzee).